Reading from the N-terminus, the 409-residue chain is Arginine biosynthesis bifunctional protein ArgJ (409 aa).

Substrate-binding residues include Thr-165, Lys-191, Thr-202, Glu-282, Asn-404, and Thr-409. Thr-202 acts as the Nucleophile in catalysis.

This sequence belongs to the ArgJ family. In terms of assembly, heterotetramer of two alpha and two beta chains.

Its subcellular location is the cytoplasm. The catalysed reaction is N(2)-acetyl-L-ornithine + L-glutamate = N-acetyl-L-glutamate + L-ornithine. It catalyses the reaction L-glutamate + acetyl-CoA = N-acetyl-L-glutamate + CoA + H(+). It functions in the pathway amino-acid biosynthesis; L-arginine biosynthesis; L-ornithine and N-acetyl-L-glutamate from L-glutamate and N(2)-acetyl-L-ornithine (cyclic): step 1/1. The protein operates within amino-acid biosynthesis; L-arginine biosynthesis; N(2)-acetyl-L-ornithine from L-glutamate: step 1/4. Functionally, catalyzes two activities which are involved in the cyclic version of arginine biosynthesis: the synthesis of N-acetylglutamate from glutamate and acetyl-CoA as the acetyl donor, and of ornithine by transacetylation between N(2)-acetylornithine and glutamate. The sequence is that of Arginine biosynthesis bifunctional protein ArgJ from Parasynechococcus marenigrum (strain WH8102).